The following is a 41-amino-acid chain: SDGRNEAANDEASDVIELALKGCCSNPVCHLEHPNACGRRR.

Positions 1 to 21 (SDGRNEAANDEASDVIELALK) are excised as a propeptide. Disulfide bonds link Cys-23–Cys-29 and Cys-24–Cys-37. The interval 25-27 (SNP) is ser-Xaa-Pro motif, crucial for potent interaction with nAChR. Cys-37 carries the post-translational modification Cysteine amide.

This sequence belongs to the conotoxin A superfamily. As to expression, expressed by the venom duct.

It is found in the secreted. Alpha-conotoxins act on postsynaptic membranes, they bind to the nicotinic acetylcholine receptors (nAChR) and thus inhibit them. This toxin blocks rat neuronal nAChR alpha-3-beta-2/CHRNA3-CHRNB2 (IC(50)=128.9 nM) and alpha-7/CHRNA7 (IC(50)=1511 nM). In vivo, intramuscular injection into zebrafish does not produce any effect on the locomotion of zebrafish. The chain is Alpha-conotoxin CIB from Conus catus (Cat cone).